The chain runs to 476 residues: Adenosylhomocysteinase (476 aa).

Residues threonine 67, aspartate 142, and glutamate 202 each contribute to the substrate site. An NAD(+)-binding site is contributed by 203–205 (TTT). Lysine 232 and aspartate 236 together coordinate substrate. Residues asparagine 237, 266-271 (GYGDVG), glutamate 289, asparagine 324, 345-347 (IGH), and asparagine 390 each bind NAD(+).

It belongs to the adenosylhomocysteinase family. NAD(+) is required as a cofactor.

Its subcellular location is the cytoplasm. The catalysed reaction is S-adenosyl-L-homocysteine + H2O = L-homocysteine + adenosine. It participates in amino-acid biosynthesis; L-homocysteine biosynthesis; L-homocysteine from S-adenosyl-L-homocysteine: step 1/1. May play a key role in the regulation of the intracellular concentration of adenosylhomocysteine. This is Adenosylhomocysteinase from Synechococcus sp. (strain CC9902).